The sequence spans 280 residues: Orotidine 5'-phosphate decarboxylase (280 aa).

Lys96 (proton donor) is an active-site residue.

Belongs to the OMP decarboxylase family. Type 2 subfamily.

It carries out the reaction orotidine 5'-phosphate + H(+) = UMP + CO2. It functions in the pathway pyrimidine metabolism; UMP biosynthesis via de novo pathway; UMP from orotate: step 2/2. This Parabacteroides distasonis (strain ATCC 8503 / DSM 20701 / CIP 104284 / JCM 5825 / NCTC 11152) protein is Orotidine 5'-phosphate decarboxylase.